Reading from the N-terminus, the 477-residue chain is UDP-galactose-lipid carrier transferase (477 aa).

The next 6 membrane-spanning stretches (helical) occupy residues 16 to 36 (SLAL…IVLI), 52 to 72 (LDLK…WFWV), 93 to 113 (TILI…WELS), 115 to 135 (WIWI…RACV), 175 to 195 (VIAF…GVPV), and 284 to 304 (FDLV…VILI). Residues 305 to 477 (FMVSRDGGAP…GVVLKRDGAY (173 aa)) are Cytoplasmic-facing.

This sequence belongs to the bacterial sugar transferase family.

It is found in the cell membrane. The protein operates within glycan metabolism; exopolysaccharide biosynthesis. Involved in the biosynthesis of amylovoran which functions as a virulence factor. May act as a sugar transferase and may be involved in the export of the repeating unit by flipping the lipid carrier to the periplasmic face of the inner membrane. The protein is UDP-galactose-lipid carrier transferase (amsG) of Erwinia amylovora (Fire blight bacteria).